The sequence spans 644 residues: Exoribonuclease 2 (644 aa).

One can recognise an RNB domain in the interval 189–516 (REDLTALDFV…NHRLLKAVIK (328 aa)). The 83-residue stretch at 561-643 (DTRFAAEIVD…ETRSIIARPV (83 aa)) folds into the S1 motif domain.

Belongs to the RNR ribonuclease family. RNase II subfamily.

It localises to the cytoplasm. It catalyses the reaction Exonucleolytic cleavage in the 3'- to 5'-direction to yield nucleoside 5'-phosphates.. Functionally, involved in mRNA degradation. Hydrolyzes single-stranded polyribonucleotides processively in the 3' to 5' direction. The sequence is that of Exoribonuclease 2 from Escherichia coli O8 (strain IAI1).